A 451-amino-acid chain; its full sequence is Tapasin-related protein (451 aa).

Positions 1 to 20 (MGLEPSWYLLLCLAVSGAAG) are cleaved as a signal peptide. The Lumenal portion of the chain corresponds to 21 to 412 (TDPPTAPTTA…RVLPNPEQRG (392 aa)). One can recognise an Ig-like V-type domain in the interval 196-301 (FQVTSETQTL…TSLYQAQQIM (106 aa)). Cystine bridges form between Cys217–Cys288 and Cys326–Cys387. N-linked (GlcNAc...) asparagine glycosylation is found at Asn270 and Asn277. One can recognise an Ig-like C1-type domain in the interval 302–399 (PLNILAPPKI…AHVSLEEPLT (98 aa)). Residues 413 to 433 (TLGVIFASIIFLSALLLFLGL) form a helical membrane-spanning segment. Over 434–451 (HRQQASSSRSTRPMRHSG) the chain is Cytoplasmic.

As to quaternary structure, interacts with peptide-free HLA-A*02-B2M complexes or those loaded with low affinity peptides, likely facilitating peptide exchange onto higher affinity peptides. Interacts with MR1 in a ligand-independent way; this interaction may stabilize MR1 pool and facilitate ligand loading and dissociation. In terms of tissue distribution, widely expressed.

Its subcellular location is the cell membrane. It is found in the endoplasmic reticulum membrane. The protein localises to the microsome membrane. It localises to the golgi apparatus membrane. Its function is as follows. Component of the antigen processing and presentation pathway, which binds to MHC class I coupled with beta2-microglobulin/B2M. Association between TAPBPR and MHC class I occurs in the absence of a functional peptide-loading complex (PLC). Expression seems to slow down and down-regulate MHC class I surface expression. In Mus musculus (Mouse), this protein is Tapasin-related protein (Tapbpl).